Reading from the N-terminus, the 392-residue chain is UPF0229 protein CPE1333 (392 aa).

Residues 75–100 (VTTGTGEERRGDRISSDKRKAISNNK) are disordered. Residues 80–94 (GEERRGDRISSDKRK) show a composition bias toward basic and acidic residues.

It belongs to the UPF0229 family.

The sequence is that of UPF0229 protein CPE1333 from Clostridium perfringens (strain 13 / Type A).